The following is a 43-amino-acid chain: Holotricin-1 (43 aa).

3 disulfide bridges follow: C3–C34, C20–C39, and C24–C41.

This sequence belongs to the invertebrate defensin family. Type 1 subfamily. In terms of tissue distribution, hemolymph.

The protein resides in the secreted. Functionally, shows potent antibacterial activity against Gram-positive bacteria. In Holotrichia diomphalia (Korean black chafer), this protein is Holotricin-1.